A 48-amino-acid chain; its full sequence is Delta-stichotoxin-Hmg4a (48 aa).

3 disulfides stabilise this stretch: Cys3/Cys43, Cys5/Cys33, and Cys26/Cys44.

It belongs to the sea anemone sodium channel inhibitory toxin family. Type II subfamily.

The protein resides in the secreted. Its subcellular location is the nematocyst. In terms of biological role, binds specifically to voltage-gated sodium channels (Nav), thereby delaying their inactivation during signal transduction. Its toxicity is weaker than that of RpIII (AC P08380). The sequence is that of Delta-stichotoxin-Hmg4a from Heteractis magnifica (Magnificent sea anemone).